A 391-amino-acid chain; its full sequence is Multidrug resistance protein MdtL (391 aa).

Transmembrane regions (helical) follow at residues Phe-4 to Val-24, Ile-42 to Ala-62, Pro-69 to Glu-89, Leu-93 to Phe-113, Leu-131 to Met-151, Ser-158 to Leu-178, Phe-203 to Val-222, Ala-245 to Phe-265, Thr-269 to Pro-289, Val-293 to Met-313, Leu-331 to Ile-351, and Met-356 to Ala-376.

This sequence belongs to the major facilitator superfamily. DHA1 family. MdtL (TC 2.A.1.2.22) subfamily.

Its subcellular location is the cell inner membrane. In terms of biological role, confers resistance to chloramphenicol. This Escherichia coli O17:K52:H18 (strain UMN026 / ExPEC) protein is Multidrug resistance protein MdtL.